The chain runs to 209 residues: Thymidylate kinase (209 aa).

10 to 17 (GLDGAGKS) is an ATP binding site.

It belongs to the thymidylate kinase family.

It carries out the reaction dTMP + ATP = dTDP + ADP. Its function is as follows. Phosphorylation of dTMP to form dTDP in both de novo and salvage pathways of dTTP synthesis. The polypeptide is Thymidylate kinase (Francisella tularensis subsp. novicida (strain U112)).